Reading from the N-terminus, the 264-residue chain is Phosphonoacetaldehyde hydrolase (264 aa).

Residue aspartate 9 is the Nucleophile of the active site. Positions 9 and 11 each coordinate Mg(2+). Lysine 50 (schiff-base intermediate with substrate) is an active-site residue. Mg(2+) is bound at residue aspartate 183.

The protein belongs to the HAD-like hydrolase superfamily. PhnX family. Homodimer. The cofactor is Mg(2+).

The catalysed reaction is phosphonoacetaldehyde + H2O = acetaldehyde + phosphate + H(+). Its function is as follows. Involved in phosphonate degradation. In Bacillus cereus (strain ZK / E33L), this protein is Phosphonoacetaldehyde hydrolase.